The following is a 164-amino-acid chain: ATP synthase subunit b (164 aa).

A helical transmembrane segment spans residues 6 to 26; that stretch reads GELVGNFILVTGSVIVLLLLI.

This sequence belongs to the ATPase B chain family. As to quaternary structure, F-type ATPases have 2 components, F(1) - the catalytic core - and F(0) - the membrane proton channel. F(1) has five subunits: alpha(3), beta(3), gamma(1), delta(1), epsilon(1). F(0) has three main subunits: a(1), b(2) and c(10-14). The alpha and beta chains form an alternating ring which encloses part of the gamma chain. F(1) is attached to F(0) by a central stalk formed by the gamma and epsilon chains, while a peripheral stalk is formed by the delta and b chains.

It is found in the cell membrane. Its function is as follows. F(1)F(0) ATP synthase produces ATP from ADP in the presence of a proton or sodium gradient. F-type ATPases consist of two structural domains, F(1) containing the extramembraneous catalytic core and F(0) containing the membrane proton channel, linked together by a central stalk and a peripheral stalk. During catalysis, ATP synthesis in the catalytic domain of F(1) is coupled via a rotary mechanism of the central stalk subunits to proton translocation. Component of the F(0) channel, it forms part of the peripheral stalk, linking F(1) to F(0). This Streptococcus pyogenes serotype M12 (strain MGAS2096) protein is ATP synthase subunit b.